The sequence spans 785 residues: Tripartite terminase subunit 1 (785 aa).

The segment at 197–225 (CAVCFEELCVTANQGATIARRLADRICNH) adopts a C3H1-type zinc-finger fold. The interval 433 to 489 (GGAADAPKGGAGPDDDGDRVAVEEGTRGLGAPGGGGEDEDRRRGPGGQGPETWGDIA) is disordered. ATP is bound at residue 696–703 (FASVYRCG).

This sequence belongs to the herpesviridae TRM1 protein family. As to quaternary structure, associates with TRM2 and TRM3 to form the tripartite terminase complex. Interacts with portal protein.

It is found in the host nucleus. In terms of biological role, component of the molecular motor that translocates viral genomic DNA in empty capsid during DNA packaging. Forms a tripartite terminase complex together with TRM2 and TRM3 in the host cytoplasm. Once the complex reaches the host nucleus, it interacts with the capsid portal vertex. This portal forms a ring in which genomic DNA is translocated into the capsid. TRM1 carries an endonuclease activity that plays an important role for the cleavage of concatemeric viral DNA into unit length genomes. The chain is Tripartite terminase subunit 1 from Human herpesvirus 1 (strain Angelotti) (HHV-1).